The chain runs to 844 residues: DNA mismatch repair protein MutS (844 aa).

602 to 609 (GPNMSGKS) lines the ATP pocket.

The protein belongs to the DNA mismatch repair MutS family.

In terms of biological role, this protein is involved in the repair of mismatches in DNA. It is possible that it carries out the mismatch recognition step. This protein has a weak ATPase activity. This chain is DNA mismatch repair protein MutS, found in Streptococcus pneumoniae (strain Hungary19A-6).